Consider the following 419-residue polypeptide: MNVHRGSDSDRLLRQEASCLVDDTLAVAQEKEANSLASSGPHNLTYPLGPRNEDLSLDYASQPANLQFPHIMPLAEDIKGSCFQSGNKRNHEPFIAPERFGNSSVGFGSNSHSQAPEKVTLLVDGTRFVVNPQIFTAHPDTMLGRMFGPGREYNFTRPNEKGEYEIAEGISATVFRTVLDYYKTGIINCPDGISIPDLRDTCDYLCINFDFNTIRCQDLSALLHELSNDGAHKQFDHYLEELILPIMVGCAKKGERECHIVVLTDEDSVDWDEDHPPPMGEEYSQILYSSKLYRFFKYIENRDVAKTVLKERGLKNIRIGIEGYPTCKEKIKRRPGGRSEVIYNYVQRPFIQMSWEKEEGKSRHVDFQCVRSKSLTNLVAAGDDVLEDQEILMHHPPQVDELDRLNAPLSQMASNDFQD.

A BTB domain is found at 117 to 191 (EKVTLLVDGT…YKTGIINCPD (75 aa)).

In terms of assembly, interacts with AKT1; AKT2 and AKT3. Associates with PP2CA. Part of a complex containing MARK4.

Its subcellular location is the cytoplasm. In terms of biological role, promotes the phosphorylation of AKT family members. This Homo sapiens (Human) protein is BTB/POZ domain-containing protein KCTD20 (KCTD20).